A 98-amino-acid polypeptide reads, in one-letter code: Putative transcriptional regulator YdaS (98 aa).

When overexpressed, it induces Rac prophage excision, possibly to counteract the lethal toxicity of YdaT. Overexpression of ydaS or ydaST reduces growth and leads to loss of cell viability. May contribute to toxicity and morphological defects. This chain is Putative transcriptional regulator YdaS (ydaS), found in Escherichia coli (strain K12).